We begin with the raw amino-acid sequence, 439 residues long: Nitroalkane oxidase (439 aa).

FAD-binding positions include 131-134 (LMHS), 139-141 (TAN), 169-171 (WPS), R304, 313-314 (HQ), 375-379 (KAVGM), and 400-404 (LFDGG). The Proton acceptor role is filled by D402.

Belongs to the acyl-CoA dehydrogenase family. As to quaternary structure, homotetramer. It depends on FAD as a cofactor.

It carries out the reaction a primary nitroalkane + O2 + H2O = an aldehyde + nitrite + H2O2 + H(+). It catalyses the reaction a secondary nitroalkane + O2 + H2O = a ketone + nitrite + H2O2 + H(+). Strongly inhibited by mercury chloride and KCN. Functionally, catalyzes the oxidative denitrification of neutral nitroalkanes, including 3-nitro-2-pentanol, 1-nitropropane, 2-nitropropane, nitroethane and nitrocyclohexane, and may thereby protect the organism against toxic compounds. Has no detectable acyl-CoA dehydrogenase activity. This is Nitroalkane oxidase from Fusarium oxysporum (Fusarium vascular wilt).